The sequence spans 273 residues: Ribosomal RNA small subunit methyltransferase A (273 aa).

Asn18, Leu20, Gly45, Glu66, Asp91, and Asn113 together coordinate S-adenosyl-L-methionine.

Belongs to the class I-like SAM-binding methyltransferase superfamily. rRNA adenine N(6)-methyltransferase family. RsmA subfamily.

It is found in the cytoplasm. It catalyses the reaction adenosine(1518)/adenosine(1519) in 16S rRNA + 4 S-adenosyl-L-methionine = N(6)-dimethyladenosine(1518)/N(6)-dimethyladenosine(1519) in 16S rRNA + 4 S-adenosyl-L-homocysteine + 4 H(+). In terms of biological role, specifically dimethylates two adjacent adenosines (A1518 and A1519) in the loop of a conserved hairpin near the 3'-end of 16S rRNA in the 30S particle. May play a critical role in biogenesis of 30S subunits. The sequence is that of Ribosomal RNA small subunit methyltransferase A from Klebsiella pneumoniae subsp. pneumoniae (strain ATCC 700721 / MGH 78578).